A 316-amino-acid polypeptide reads, in one-letter code: Na(+)-translocating NADH-quinone reductase subunit C (316 aa).

A helical transmembrane segment spans residues 13–33; sequence WYIILFIFVLSLIAGTLLSSV. Threonine 280 bears the FMN phosphoryl threonine mark.

The protein belongs to the NqrC family. Composed of six subunits; NqrA, NqrB, NqrC, NqrD, NqrE and NqrF. Requires FMN as cofactor.

It localises to the cell inner membrane. The enzyme catalyses a ubiquinone + n Na(+)(in) + NADH + H(+) = a ubiquinol + n Na(+)(out) + NAD(+). In terms of biological role, NQR complex catalyzes the reduction of ubiquinone-1 to ubiquinol by two successive reactions, coupled with the transport of Na(+) ions from the cytoplasm to the periplasm. NqrA to NqrE are probably involved in the second step, the conversion of ubisemiquinone to ubiquinol. In Chlamydia trachomatis serovar D (strain ATCC VR-885 / DSM 19411 / UW-3/Cx), this protein is Na(+)-translocating NADH-quinone reductase subunit C.